A 268-amino-acid chain; its full sequence is Phosphatidylglycerol--prolipoprotein diacylglyceryl transferase (268 aa).

Helical transmembrane passes span 10–30, 56–76, 92–112, 120–140, 174–194, 202–222, and 236–256; these read VALA…LIGI, LVFW…VLFY, WKGG…ALWF, FFEL…AGRI, PSQL…LWLF, MAVS…VEFV, and WLTM…GLIW. Arginine 139 lines the a 1,2-diacyl-sn-glycero-3-phospho-(1'-sn-glycerol) pocket.

The protein belongs to the Lgt family.

It is found in the cell inner membrane. It carries out the reaction L-cysteinyl-[prolipoprotein] + a 1,2-diacyl-sn-glycero-3-phospho-(1'-sn-glycerol) = an S-1,2-diacyl-sn-glyceryl-L-cysteinyl-[prolipoprotein] + sn-glycerol 1-phosphate + H(+). Its pathway is protein modification; lipoprotein biosynthesis (diacylglyceryl transfer). Catalyzes the transfer of the diacylglyceryl group from phosphatidylglycerol to the sulfhydryl group of the N-terminal cysteine of a prolipoprotein, the first step in the formation of mature lipoproteins. The protein is Phosphatidylglycerol--prolipoprotein diacylglyceryl transferase of Pseudomonas putida (strain ATCC 700007 / DSM 6899 / JCM 31910 / BCRC 17059 / LMG 24140 / F1).